The primary structure comprises 255 residues: ATP synthase subunit a (255 aa).

Helical transmembrane passes span 28–48, 86–106, 125–145, 164–184, 203–223, and 224–244; these read VDSL…FWLG, IAPL…MDLV, ILPT…FFLI, FHPF…IELI, LIFI…GTPW, and AIFH…LTVV.

It belongs to the ATPase A chain family. As to quaternary structure, F-type ATPases have 2 components, CF(1) - the catalytic core - and CF(0) - the membrane proton channel. CF(1) has five subunits: alpha(3), beta(3), gamma(1), delta(1), epsilon(1). CF(0) has three main subunits: a(1), b(2) and c(9-12). The alpha and beta chains form an alternating ring which encloses part of the gamma chain. CF(1) is attached to CF(0) by a central stalk formed by the gamma and epsilon chains, while a peripheral stalk is formed by the delta and b chains.

The protein localises to the cell inner membrane. In terms of biological role, key component of the proton channel; it plays a direct role in the translocation of protons across the membrane. This is ATP synthase subunit a from Alkalilimnicola ehrlichii (strain ATCC BAA-1101 / DSM 17681 / MLHE-1).